Reading from the N-terminus, the 297-residue chain is F-actin-capping protein subunit beta (297 aa).

Positions D276 to E289 are enriched in basic and acidic residues. The segment at D276–L297 is disordered.

It belongs to the F-actin-capping protein beta subunit family. In terms of assembly, component of the F-actin capping complex, composed of a heterodimer of an alpha and a beta subunit.

The protein resides in the cytoplasm. Its subcellular location is the cytoskeleton. It is found in the actin patch. In terms of biological role, F-actin-capping proteins bind in a Ca(2+)-independent manner to the fast growing ends of actin filaments (barbed end) thereby blocking the exchange of subunits at these ends. Unlike other capping proteins (such as gelsolin and severin), these proteins do not sever actin filaments. This Debaryomyces hansenii (strain ATCC 36239 / CBS 767 / BCRC 21394 / JCM 1990 / NBRC 0083 / IGC 2968) (Yeast) protein is F-actin-capping protein subunit beta (CAP2).